A 347-amino-acid polypeptide reads, in one-letter code: MRFVKVFEEAIDPGAVAELLESFLTRFELVQLVSPAWEELAYYEKNTRDFLFPEPRLASSHLGMQREVLMKTAIWFPGIAPKIEFSTRTAILECVFPCKNRFICEERCRLERSVSKSHGQRVQATNRKKKPKEKDSDQLPKGTQSRLPSPQRLHLHRPTQRNHGKSFKFPGERKPPFVVRHVDSGNPFGENNLEHCSKKSRRKPKLINFDLSKKRASSLDSLEANIKVIREPDERIVLKSQPPPPVDSSESRKPSLSHQGDASLHTETSVTTSQLSRPPSPLNQPLLQERFQPFSQSTWQKIPEGVRSLLTSHRAHPKDSFISETNSIHERPSYPLKKHLLRAQRYF.

The disordered stretch occupies residues 115–199 (SKSHGQRVQA…ENNLEHCSKK (85 aa)). The span at 116–125 (KSHGQRVQAT) shows a compositional bias: polar residues. Residues 153–166 (LHLHRPTQRNHGKS) are compositionally biased toward basic residues. The span at 170–183 (PGERKPPFVVRHVD) shows a compositional bias: basic and acidic residues. Phosphoserine is present on residues Ser-218 and Ser-221. Residues 234–285 (ERIVLKSQPPPPVDSSESRKPSLSHQGDASLHTETSVTTSQLSRPPSPLNQP) are disordered. A compositionally biased stretch (polar residues) spans 254–277 (PSLSHQGDASLHTETSVTTSQLSR).

Belongs to the SPATA6 family.

The sequence is that of Spermatogenesis associated 6-like protein (Spata6l) from Mus musculus (Mouse).